Here is a 591-residue protein sequence, read N- to C-terminus: Aspartate--tRNA(Asp/Asn) ligase (591 aa).

Position 174 (Glu174) interacts with L-aspartate. An aspartate region spans residues Gln198–Lys201. Arg220 is a binding site for L-aspartate. Residues Arg220–Glu222 and Gln229 contribute to the ATP site. Position 450 (His450) interacts with L-aspartate. Glu483 lines the ATP pocket. Residue Arg490 coordinates L-aspartate. Gly535–Arg538 is a binding site for ATP.

It belongs to the class-II aminoacyl-tRNA synthetase family. Type 1 subfamily. As to quaternary structure, homodimer.

It is found in the cytoplasm. It catalyses the reaction tRNA(Asx) + L-aspartate + ATP = L-aspartyl-tRNA(Asx) + AMP + diphosphate. In terms of biological role, aspartyl-tRNA synthetase with relaxed tRNA specificity since it is able to aspartylate not only its cognate tRNA(Asp) but also tRNA(Asn). Reaction proceeds in two steps: L-aspartate is first activated by ATP to form Asp-AMP and then transferred to the acceptor end of tRNA(Asp/Asn). This is Aspartate--tRNA(Asp/Asn) ligase from Azotobacter vinelandii (strain DJ / ATCC BAA-1303).